The sequence spans 91 residues: Small ribosomal subunit protein bS20 (91 aa).

Over residues 1-18 the composition is skewed to basic and acidic residues; sequence MPLHKSAEKRLRQSERRN. The segment at 1–25 is disordered; that stretch reads MPLHKSAEKRLRQSERRNARNRARK.

Belongs to the bacterial ribosomal protein bS20 family.

In terms of biological role, binds directly to 16S ribosomal RNA. This is Small ribosomal subunit protein bS20 from Chlorobium luteolum (strain DSM 273 / BCRC 81028 / 2530) (Pelodictyon luteolum).